Here is a 109-residue protein sequence, read N- to C-terminus: Non-structural protein ORF4a (109 aa).

In terms of assembly, interacts with host PRKRA/PACT.

The protein localises to the host cytoplasm. Functionally, dsRNA-binding protein that plays a role in the inhibition of host innate response. Suppresses host PACT-induced activation of RIGI and MDA5 and thereby circumvents the production of type I interferons. Also prevents the activation of host NF-kappa-B. Inhibits the integrated stress response (ISR) in the infected cell by binding to dsRNA and inhibiting EIF2AK2-mediated phosphorylation of EIF2S1/eIF2-alpha. Stress granule formation is thus inhibited, which allows protein synthesis and viral replication. This chain is Non-structural protein ORF4a (ORF4a), found in Middle East respiratory syndrome-related coronavirus (isolate United Kingdom/H123990006/2012) (MERS-CoV).